Here is a 432-residue protein sequence, read N- to C-terminus: Pachytene checkpoint protein 2 homolog (432 aa).

Met1 carries the post-translational modification N-acetylmethionine. 179–186 (GPPGTGKT) is an ATP binding site.

It belongs to the AAA ATPase family. PCH2 subfamily. In terms of assembly, specifically interacts with the ligand binding domain of the thyroid receptor (TR). This interaction does not require the presence of thyroid hormone for its interaction. Interacts with proteasome subunit PSMA8; to participate in meiosis progression during spermatogenesis.

In terms of biological role, plays a key role in chromosome recombination and chromosome structure development during meiosis. Required at early steps in meiotic recombination that leads to non-crossovers pathways. Also needed for efficient completion of homologous synapsis by influencing crossover distribution along the chromosomes affecting both crossovers and non-crossovers pathways. Also required for development of higher-order chromosome structures and is needed for synaptonemal-complex formation. In males, required for efficient synapsis of the sex chromosomes and for sex body formation. Promotes early steps of the DNA double-strand breaks (DSBs) repair process upstream of the assembly of RAD51 complexes. Required for depletion of HORMAD1 and HORMAD2 from synapsed chromosomes. Plays a role in mitotic spindle assembly checkpoint (SAC) activation. The chain is Pachytene checkpoint protein 2 homolog (Trip13) from Rattus norvegicus (Rat).